The following is a 92-amino-acid chain: NELL2-interacting cell ontogeny regulator 1 (92 aa).

The first 30 residues, 1–30 (MALPSAWSVMRVVIPFISVLGLLGVRLVGA), serve as a signal peptide directing secretion.

This sequence belongs to the NICOL family.

It localises to the secreted. It is found in the cytoplasm. Its subcellular location is the perinuclear region. Functionally, mRNA-binding protein which interacts with a range of target mRNAs and may promote extracellular matrix production. May function as a component of lumicrine signaling and may play a crucial role in epididymal-mediated sperm maturation and male fertility. This is NELL2-interacting cell ontogeny regulator 1 from Gallus gallus (Chicken).